We begin with the raw amino-acid sequence, 279 residues long: Thymidylate synthase (279 aa).

133-134 (RR) contributes to the dUMP binding site. The active-site Nucleophile is Cys-154. DUMP-binding positions include 178–181 (RSND), Asn-189, and 219–221 (HIY). A (6R)-5,10-methylene-5,6,7,8-tetrahydrofolate-binding site is contributed by Asp-181. A (6R)-5,10-methylene-5,6,7,8-tetrahydrofolate-binding site is contributed by Ala-278.

The protein belongs to the thymidylate synthase family. Bacterial-type ThyA subfamily. As to quaternary structure, homodimer.

The protein localises to the cytoplasm. The enzyme catalyses dUMP + (6R)-5,10-methylene-5,6,7,8-tetrahydrofolate = 7,8-dihydrofolate + dTMP. It functions in the pathway pyrimidine metabolism; dTTP biosynthesis. Functionally, catalyzes the reductive methylation of 2'-deoxyuridine-5'-monophosphate (dUMP) to 2'-deoxythymidine-5'-monophosphate (dTMP) while utilizing 5,10-methylenetetrahydrofolate (mTHF) as the methyl donor and reductant in the reaction, yielding dihydrofolate (DHF) as a by-product. This enzymatic reaction provides an intracellular de novo source of dTMP, an essential precursor for DNA biosynthesis. The polypeptide is Thymidylate synthase (Streptococcus pyogenes serotype M6 (strain ATCC BAA-946 / MGAS10394)).